We begin with the raw amino-acid sequence, 188 residues long: GMP synthase [glutamine-hydrolyzing] subunit A (188 aa).

One can recognise a Glutamine amidotransferase type-1 domain in the interval 3-188 (PLYVVNNYGQ…FSICTGQNKG (186 aa)). Cys75 (nucleophile) is an active-site residue. Residues His162 and Glu164 contribute to the active site.

Heterodimer composed of a glutamine amidotransferase subunit (A) and a GMP-binding subunit (B).

It carries out the reaction XMP + L-glutamine + ATP + H2O = GMP + L-glutamate + AMP + diphosphate + 2 H(+). The protein operates within purine metabolism; GMP biosynthesis; GMP from XMP (L-Gln route): step 1/1. Its function is as follows. Catalyzes the synthesis of GMP from XMP. This Methanospirillum hungatei JF-1 (strain ATCC 27890 / DSM 864 / NBRC 100397 / JF-1) protein is GMP synthase [glutamine-hydrolyzing] subunit A.